Reading from the N-terminus, the 238-residue chain is Ribonuclease PH (238 aa).

Phosphate-binding positions include Arg-86 and 124–126 (GTR).

Belongs to the RNase PH family. Homohexameric ring arranged as a trimer of dimers.

The catalysed reaction is tRNA(n+1) + phosphate = tRNA(n) + a ribonucleoside 5'-diphosphate. Phosphorolytic 3'-5' exoribonuclease that plays an important role in tRNA 3'-end maturation. Removes nucleotide residues following the 3'-CCA terminus of tRNAs; can also add nucleotides to the ends of RNA molecules by using nucleoside diphosphates as substrates, but this may not be physiologically important. Probably plays a role in initiation of 16S rRNA degradation (leading to ribosome degradation) during starvation. The chain is Ribonuclease PH from Azorhizobium caulinodans (strain ATCC 43989 / DSM 5975 / JCM 20966 / LMG 6465 / NBRC 14845 / NCIMB 13405 / ORS 571).